The chain runs to 430 residues: Enolase (430 aa).

(2R)-2-phosphoglycerate is bound at residue Q167. E209 functions as the Proton donor in the catalytic mechanism. Residues D246, E287, and D314 each coordinate Mg(2+). K339, R368, S369, and K390 together coordinate (2R)-2-phosphoglycerate. K339 functions as the Proton acceptor in the catalytic mechanism.

Belongs to the enolase family. The cofactor is Mg(2+).

It localises to the cytoplasm. It is found in the secreted. Its subcellular location is the cell surface. The catalysed reaction is (2R)-2-phosphoglycerate = phosphoenolpyruvate + H2O. It functions in the pathway carbohydrate degradation; glycolysis; pyruvate from D-glyceraldehyde 3-phosphate: step 4/5. Catalyzes the reversible conversion of 2-phosphoglycerate (2-PG) into phosphoenolpyruvate (PEP). It is essential for the degradation of carbohydrates via glycolysis. The chain is Enolase from Prochlorococcus marinus subsp. pastoris (strain CCMP1986 / NIES-2087 / MED4).